A 281-amino-acid polypeptide reads, in one-letter code: Bidirectional sugar transporter SWEET14 (281 aa).

Topologically, residues M1–N6 are extracellular. A helical membrane pass occupies residues V7 to P27. The MtN3/slv 1 domain occupies T11–K97. The Cytoplasmic portion of the chain corresponds to V28 to G42. Residues F43–L63 form a helical membrane-spanning segment. Residues Q64–F70 lie on the Extracellular side of the membrane. A helical transmembrane segment spans residues L71–I91. Residues T92–K104 are Cytoplasmic-facing. The helical transmembrane segment at V105–T125 threads the bilayer. Residues K126–K132 are Extracellular-facing. Residues V133–M153 traverse the membrane as a helical segment. One can recognise a MtN3/slv 2 domain in the interval V133–Y216. Residues R154–P166 lie on the Cytoplasmic side of the membrane. Residues F167–I187 form a helical membrane-spanning segment. Residues K188–V192 are Extracellular-facing. A helical membrane pass occupies residues A193–F213. Residues K214–N281 are Cytoplasmic-facing. Residues T244–D259 show a composition bias toward polar residues. A disordered region spans residues T244 to N281. Residues H267–N281 are compositionally biased toward basic and acidic residues.

This sequence belongs to the SWEET sugar transporter family. In terms of assembly, forms homooligomers and/or heterooligomers.

Its subcellular location is the cell membrane. Mediates both low-affinity uptake and efflux of sugar across the plasma membrane. This Arabidopsis thaliana (Mouse-ear cress) protein is Bidirectional sugar transporter SWEET14.